Reading from the N-terminus, the 295-residue chain is 33 kDa chaperonin (295 aa).

2 disulfides stabilise this stretch: cysteine 238–cysteine 240 and cysteine 271–cysteine 274.

The protein belongs to the HSP33 family. In terms of processing, under oxidizing conditions two disulfide bonds are formed involving the reactive cysteines. Under reducing conditions zinc is bound to the reactive cysteines and the protein is inactive.

The protein resides in the cytoplasm. Functionally, redox regulated molecular chaperone. Protects both thermally unfolding and oxidatively damaged proteins from irreversible aggregation. Plays an important role in the bacterial defense system toward oxidative stress. This chain is 33 kDa chaperonin, found in Clostridium botulinum (strain Eklund 17B / Type B).